A 1252-amino-acid polypeptide reads, in one-letter code: MFKCPERVSIKKKEDILDLPNLVEVQIKSYKQFLQIGKLAEERENIGLEEVFREIFPIKSYNEATILEYLSYNLGVPKYSPEECIRRGITYSVTLKVRFRLTDETGIKEEEVYMGTIPIMTDKGTFIINGAERVVVSQVHRSPGINFEQEKHSKGNVLFSFRIIPYRGSWLEASFDINDLIYIHIDRKKRRRKILAMTFIRALGYSTDADIIEEFFAVEEHSLRSEKDFVALVGKVLADNVVDADSSLVYGKAGEKLSTAMLKRILDAGVQSLKIAVGADENHPIIKMLAKDPTDSYEAALKDFYRRLRPGEPATLANARSTIMRLFFDSKRYNLGRVGRYKLNKKLGFPLDDETLSQVTLRKEDVIGALKYLIRLRMGDEKTSIDDIDHLANRRVRSVGELIQNHCRSGLARMEKIVRERMNLFDFSSDTLTPGKIISAKGLVSVLKDFFSRSQLSQFMDQTNPVAELTHKRRLSALGPGGLNRERAGFEVRDVHSSHYGRICPIETPEGPNIGLITSLSSFAKINEFGFIETPYRVVRDGIVTDEIEYMTADVEEDCVIAQASAELDEYNMFKDSVCWARYKGEAFEADTSTVTHMDVSPKQLVSVVTGLIPFLEHDDANRALMGSNMQRQAVPLLKTEAAIVGTGLEGRAAKDSGAIVVAQEDGVVEYVDSYEIVVAKKNNPTLKDTYPLKKFLRSNSGTCINQTPLCSVGDVVTHGDVLADGPATDKGELALGKNVLVAFMPWYGYNFEDAIIISEKLIKQDAYTSIYIEEFELTARDTKLGKEEITRDIPNVSEEVLANLGEDGIVRIGAEVKPGDILVGKITPKSETELAPEERLLRAIFGEKAADVKDASLTVPPGTEGVVMDVKVFSRKDRLSKSDDELVEEAVHLKDLQKEYKSQLAQLKMEHREKLGALLLNEKAPAAIIHRRSADILVQEGAVFDQETIELLERESLVDLLMAPCDMYDVLKDILSNYETAVQRLEVNYKTEAEHIKEGDADLDHGVIRQVKVYVASKRKLQVGDKMAGRHGNKGVVSKIVPEADMPFLANGETVQMILNPLGVPSRMNLGQVLETHLGYAAKTAGIYVKTPVFEGFPESRIWDMMIEQGLPEDGKSYLFDGKTGERFDSKVVVGYIYMLKLSHLIADKIHARSIGPYSLVTQQPLGGKAQMGGQRFGEMEVWALEAYGVAHMLQEILTVKSDDVSGRTRIYESIVKGENLLRSGTPESFNVLIKEMQGLGLDVRPMVVDA.

This sequence belongs to the RNA polymerase beta chain family. In terms of assembly, the RNAP catalytic core consists of 2 alpha, 1 beta, 1 beta' and 1 omega subunit. When a sigma factor is associated with the core the holoenzyme is formed, which can initiate transcription.

The enzyme catalyses RNA(n) + a ribonucleoside 5'-triphosphate = RNA(n+1) + diphosphate. In terms of biological role, DNA-dependent RNA polymerase catalyzes the transcription of DNA into RNA using the four ribonucleoside triphosphates as substrates. The chain is DNA-directed RNA polymerase subunit beta from Chlamydia muridarum (strain MoPn / Nigg).